A 307-amino-acid polypeptide reads, in one-letter code: Retron Ec86 putative ribosyltransferase/DNA-binding protein (307 aa).

In terms of biological role, possible ribosyltransferase/DNA-binding component of antiviral defense system retron Ec86, composed of a non-coding RNA (ncRNA), a ribosyltransferase/DNA-binding protein and a reverse transcriptase (RT). Expression of the 3-gene retron confers protection against bacteriophages T5. At multiplicity of infection (MOI) of 0.02 cultures grow normally when infected with T5 without collapsing, at MOI 2 cultures enter growth stasis. The protein is Retron Ec86 putative ribosyltransferase/DNA-binding protein of Escherichia coli.